A 200-amino-acid polypeptide reads, in one-letter code: Charged multivesicular body protein 6-A (200 aa).

Glycine 2 carries N-myristoyl glycine lipidation. A coiled-coil region spans residues 9–102; that stretch reads RRSRVTEQDK…FAQIEMKVIE (94 aa). The interval 166-200 is disordered; that stretch reads EDLELPEAPSEPLPDTIPEKQAVKNKPKPQMIAAS. Residues 168–179 carry the Type-2 MIT-interacting motif motif; it reads LELPEAPSEPLP.

This sequence belongs to the SNF7 family. In terms of assembly, probable core component of the endosomal sorting required for transport complex III (ESCRT-III). ESCRT-III components are thought to multimerize to form a flat lattice on the perimeter membrane of the endosome.

It localises to the endomembrane system. It is found in the late endosome membrane. Its function is as follows. Probable core component of the endosomal sorting required for transport complex III (ESCRT-III) which is involved in multivesicular bodies (MVBs) formation and sorting of endosomal cargo proteins into MVBs. MVBs contain intraluminal vesicles (ILVs) that are generated by invagination and scission from the limiting membrane of the endosome and mostly are delivered to lysosomes enabling degradation of membrane proteins, such as stimulated growth factor receptors, lysosomal enzymes and lipids. In the ESCRT-III complex, it probably serves as an acceptor for the ESCRT-II complex on endosomal membranes. The polypeptide is Charged multivesicular body protein 6-A (chmp6-a) (Xenopus laevis (African clawed frog)).